We begin with the raw amino-acid sequence, 511 residues long: Exodeoxyribonuclease 7 large subunit (511 aa).

This sequence belongs to the XseA family. As to quaternary structure, heterooligomer composed of large and small subunits.

The protein resides in the cytoplasm. It carries out the reaction Exonucleolytic cleavage in either 5'- to 3'- or 3'- to 5'-direction to yield nucleoside 5'-phosphates.. In terms of biological role, bidirectionally degrades single-stranded DNA into large acid-insoluble oligonucleotides, which are then degraded further into small acid-soluble oligonucleotides. The sequence is that of Exodeoxyribonuclease 7 large subunit from Brucella suis (strain ATCC 23445 / NCTC 10510).